The sequence spans 512 residues: Ferredoxin--nitrite reductase (512 aa).

Residues C396, C402, C437, and C441 each contribute to the [4Fe-4S] cluster site. C441 contacts siroheme.

The protein belongs to the nitrite and sulfite reductase 4Fe-4S domain family.

The catalysed reaction is 6 oxidized [2Fe-2S]-[ferredoxin] + NH4(+) + 2 H2O = nitrite + 6 reduced [2Fe-2S]-[ferredoxin] + 8 H(+). This Synechococcus elongatus (strain ATCC 33912 / PCC 7942 / FACHB-805) (Anacystis nidulans R2) protein is Ferredoxin--nitrite reductase (nirA).